The following is a 210-amino-acid chain: DNA-directed RNA polymerase III subunit rpc31 (210 aa).

At Ser103 the chain carries Phosphoserine. The disordered stretch occupies residues Lys151 to Glu210. Composition is skewed to acidic residues over residues Glu163 to Tyr185 and Gly193 to Glu210.

It belongs to the eukaryotic RPC7 RNA polymerase subunit family. As to quaternary structure, component of the RNA polymerase III (Pol III) complex.

It localises to the cytoplasm. The protein resides in the nucleus. DNA-dependent RNA polymerase catalyzes the transcription of DNA into RNA using the four ribonucleoside triphosphates as substrates. Specific peripheric component of RNA polymerase III which synthesizes small RNAs, such as 5S rRNA and tRNAs. This Schizosaccharomyces pombe (strain 972 / ATCC 24843) (Fission yeast) protein is DNA-directed RNA polymerase III subunit rpc31 (rpc31).